The chain runs to 148 residues: Transcriptional regulator MraZ (148 aa).

2 SpoVT-AbrB domains span residues 5-51 (AAAL…PSPA) and 80-123 (ARTE…SEAG).

It belongs to the MraZ family. Forms oligomers.

The protein localises to the cytoplasm. It is found in the nucleoid. The sequence is that of Transcriptional regulator MraZ from Dechloromonas aromatica (strain RCB).